Here is a 156-residue protein sequence, read N- to C-terminus: Ribosome maturation factor RimP (156 aa).

The protein belongs to the RimP family.

It is found in the cytoplasm. Its function is as follows. Required for maturation of 30S ribosomal subunits. The polypeptide is Ribosome maturation factor RimP (Bacillus subtilis (strain 168)).